Consider the following 376-residue polypeptide: Succinyl-diaminopimelate desuccinylase (376 aa).

His67 provides a ligand contact to Zn(2+). Asp69 is an active-site residue. Residue Asp100 participates in Zn(2+) binding. Catalysis depends on Glu134, which acts as the Proton acceptor. 3 residues coordinate Zn(2+): Glu135, Glu163, and His349.

Belongs to the peptidase M20A family. DapE subfamily. Homodimer. Zn(2+) is required as a cofactor. It depends on Co(2+) as a cofactor.

It catalyses the reaction N-succinyl-(2S,6S)-2,6-diaminopimelate + H2O = (2S,6S)-2,6-diaminopimelate + succinate. It participates in amino-acid biosynthesis; L-lysine biosynthesis via DAP pathway; LL-2,6-diaminopimelate from (S)-tetrahydrodipicolinate (succinylase route): step 3/3. Catalyzes the hydrolysis of N-succinyl-L,L-diaminopimelic acid (SDAP), forming succinate and LL-2,6-diaminopimelate (DAP), an intermediate involved in the bacterial biosynthesis of lysine and meso-diaminopimelic acid, an essential component of bacterial cell walls. This Actinobacillus succinogenes (strain ATCC 55618 / DSM 22257 / CCUG 43843 / 130Z) protein is Succinyl-diaminopimelate desuccinylase.